A 266-amino-acid polypeptide reads, in one-letter code: HTH-type transcriptional regulator MurR (266 aa).

An HTH rpiR-type domain is found at 1–77; sequence MLYLTKIRNA…MALIGEYSAS (77 aa). A DNA-binding region (H-T-H motif) is located at residues 37 to 56; it reads SRQMAKQLGISQSSIVKFAQ. One can recognise an SIS domain in the interval 128–266; it reads IIEVISKAPF…LLFVGLVQHQ (139 aa).

In terms of assembly, homotetramer.

The protein operates within amino-sugar metabolism; N-acetylmuramate degradation [regulation]. Functionally, represses the expression of the murPQ operon involved in the uptake and degradation of N-acetylmuramic acid (MurNAc). Binds to two adjacent inverted repeats within the operator region. MurNAc 6-phosphate, the substrate of MurQ, is the specific inducer that weakens binding of MurR to the operator. The chain is HTH-type transcriptional regulator MurR from Shigella flexneri serotype 5b (strain 8401).